The primary structure comprises 250 residues: Pyridoxine 5'-phosphate synthase (250 aa).

3-amino-2-oxopropyl phosphate contacts are provided by Asn8 and Arg19. Residue His44 is the Proton acceptor of the active site. 1-deoxy-D-xylulose 5-phosphate contacts are provided by Arg46 and His51. Catalysis depends on Glu76, which acts as the Proton acceptor. Residue Thr106 participates in 1-deoxy-D-xylulose 5-phosphate binding. Catalysis depends on His200, which acts as the Proton donor. 3-amino-2-oxopropyl phosphate is bound by residues Asp201 and 223–224 (GH).

Belongs to the PNP synthase family. As to quaternary structure, homooctamer; tetramer of dimers.

Its subcellular location is the cytoplasm. It catalyses the reaction 3-amino-2-oxopropyl phosphate + 1-deoxy-D-xylulose 5-phosphate = pyridoxine 5'-phosphate + phosphate + 2 H2O + H(+). It participates in cofactor biosynthesis; pyridoxine 5'-phosphate biosynthesis; pyridoxine 5'-phosphate from D-erythrose 4-phosphate: step 5/5. Its function is as follows. Catalyzes the complicated ring closure reaction between the two acyclic compounds 1-deoxy-D-xylulose-5-phosphate (DXP) and 3-amino-2-oxopropyl phosphate (1-amino-acetone-3-phosphate or AAP) to form pyridoxine 5'-phosphate (PNP) and inorganic phosphate. In Rhizobium meliloti (strain 1021) (Ensifer meliloti), this protein is Pyridoxine 5'-phosphate synthase.